The sequence spans 137 residues: Basic phospholipase A2 homolog W6D49 (137 aa).

The first 16 residues, 1–16 (MRTLWILAVLLVSVDG), serve as a signal peptide directing secretion. 7 disulfide bridges follow: Cys42–Cys131, Cys44–Cys60, Cys59–Cys111, Cys65–Cys137, Cys66–Cys104, Cys73–Cys97, and Cys91–Cys102. The interval 121–133 (KKQQFNTGIFCSK) is important for membrane-damaging activities in eukaryotes and bacteria; heparin-binding.

As to quaternary structure, monomer. As to expression, expressed by the venom gland.

It localises to the secreted. With respect to regulation, heparin reduces its edema-inducing activity. Its function is as follows. Snake venom phospholipase A2 homolog that lacks enzymatic activity. Shows myotoxin activities and displays edema-inducing activities. A model of myotoxic mechanism has been proposed: an apo Lys49-PLA2 is activated by the entrance of a hydrophobic molecule (e.g. fatty acid) at the hydrophobic channel of the protein leading to a reorientation of a monomer. This reorientation causes a transition between 'inactive' to 'active' states, causing alignment of C-terminal and membrane-docking sites (MDoS) side-by-side and putting the membrane-disruption sites (MDiS) in the same plane, exposed to solvent and in a symmetric position for both monomers. The MDoS region stabilizes the toxin on membrane by the interaction of charged residues with phospholipid head groups. Subsequently, the MDiS region destabilizes the membrane with penetration of hydrophobic residues. This insertion causes a disorganization of the membrane, allowing an uncontrolled influx of ions (i.e. calcium and sodium), and eventually triggering irreversible intracellular alterations and cell death. This is Basic phospholipase A2 homolog W6D49 from Calloselasma rhodostoma (Malayan pit viper).